Here is an 858-residue protein sequence, read N- to C-terminus: Selenocysteine insertion sequence-binding protein 2 (858 aa).

Disordered stretches follow at residues 127–261 (KPRH…GDVG), 275–296 (SDHT…CTQE), and 327–625 (LKKT…DSAT). Basic and acidic residues-rich tracts occupy residues 147 to 166 (KPSD…RRAD), 188 to 197 (SSLKSDGYHK), and 215 to 224 (PEFEFSRLDF). 2 stretches are compositionally biased toward polar residues: residues 281-296 (AVTS…CTQE) and 327-352 (LKKT…NPSY). A Nuclear localization signal motif is present at residues 380–387 (KNKKKKEK). Residues 418–429 (RRHRGQSPKLHS) show a composition bias toward basic residues. Polar residues predominate over residues 430–447 (KQQTQNEFKTSGKKSQVP). Residues 539–548 (ILKERQERMQ) show a composition bias toward basic and acidic residues. Polar residues-rich tracts occupy residues 554 to 563 (SAVSLTVASD) and 571 to 582 (GASNQTPSQDNP). The segment at 678-699 (LVLGLREVLKHLKLRKLKCIII) is RNA-binding. The tract at residues 785-819 (MRQEQAGEPGPQSPPSPPMQDPIPSTEEGTLPSTG) is disordered. Pro residues predominate over residues 795-805 (PQSPPSPPMQD).

It localises to the cytoplasm. The protein localises to the nucleus. Its function is as follows. mRNA-binding protein that binds to the SECIS (selenocysteine insertion sequence) element present in the 3'-UTR of mRNAs encoding selenoproteins and facilitates the incorporation of the rare amino acid selenocysteine. Insertion of selenocysteine at UGA codons is mediated by SECISBP2 and EEFSEC: SECISBP2 (1) specifically binds the SECIS sequence once the 80S ribosome encounters an in-frame UGA codon and (2) contacts the RPS27A/eS31 of the 40S ribosome before ribosome stalling. (3) GTP-bound EEFSEC then delivers selenocysteinyl-tRNA(Sec) to the 80S ribosome and adopts a preaccommodated state conformation. (4) After GTP hydrolysis, EEFSEC dissociates from the assembly, selenocysteinyl-tRNA(Sec) accommodates, and peptide bond synthesis and selenoprotein elongation occur. This Mus musculus (Mouse) protein is Selenocysteine insertion sequence-binding protein 2.